Here is a 220-residue protein sequence, read N- to C-terminus: Fructose-6-phosphate aldolase 1 (220 aa).

Lys85 (schiff-base intermediate with substrate) is an active-site residue.

This sequence belongs to the transaldolase family. Type 3A subfamily. As to quaternary structure, homodecamer.

The protein localises to the cytoplasm. It catalyses the reaction beta-D-fructose 6-phosphate = dihydroxyacetone + D-glyceraldehyde 3-phosphate. Catalyzes the reversible formation of fructose 6-phosphate from dihydroxyacetone and D-glyceraldehyde 3-phosphate via an aldolization reaction. The polypeptide is Fructose-6-phosphate aldolase 1 (fsaA) (Escherichia coli O6:H1 (strain CFT073 / ATCC 700928 / UPEC)).